Here is a 415-residue protein sequence, read N- to C-terminus: Serine/threonine transporter SstT (415 aa).

8 helical membrane passes run 23 to 43 (ILVG…AAIA), 47 to 67 (LGTL…LMLV), 85 to 105 (ILWL…LFSF), 144 to 164 (ALLK…GFAL), 181 to 201 (AVTF…FGLV), 220 to 240 (LMVL…LIVF), 303 to 323 (GAAI…GIAV), and 333 to 353 (VVAS…LLLI).

Belongs to the dicarboxylate/amino acid:cation symporter (DAACS) (TC 2.A.23) family.

The protein localises to the cell inner membrane. The enzyme catalyses L-serine(in) + Na(+)(in) = L-serine(out) + Na(+)(out). It carries out the reaction L-threonine(in) + Na(+)(in) = L-threonine(out) + Na(+)(out). Its function is as follows. Involved in the import of serine and threonine into the cell, with the concomitant import of sodium (symport system). The chain is Serine/threonine transporter SstT from Cronobacter sakazakii (strain ATCC BAA-894) (Enterobacter sakazakii).